Here is a 110-residue protein sequence, read N- to C-terminus: DNA-directed RNA polymerase subunit omega (110 aa).

The protein belongs to the RNA polymerase subunit omega family. The RNAP catalytic core consists of 2 alpha, 1 beta, 1 beta' and 1 omega subunit. When a sigma factor is associated with the core the holoenzyme is formed, which can initiate transcription.

It catalyses the reaction RNA(n) + a ribonucleoside 5'-triphosphate = RNA(n+1) + diphosphate. In terms of biological role, promotes RNA polymerase assembly. Latches the N- and C-terminal regions of the beta' subunit thereby facilitating its interaction with the beta and alpha subunits. This Mycobacterium leprae (strain Br4923) protein is DNA-directed RNA polymerase subunit omega.